We begin with the raw amino-acid sequence, 251 residues long: Adenosylcobinamide-GDP ribazoletransferase (251 aa).

The next 6 membrane-spanning stretches (helical) occupy residues 29–49 (FAGMSRWAPIVGLILGLILAV), 65–85 (SLLIVLLAIALTGGLHLDGAM), 110–130 (AFGAIAAIAIISLKTIALCYL), 136–156 (LLILLIPVWGRWAQVLAIVRY), 175–195 (AIDLLPGAIALVLGIGAIARF), and 198–218 (LTVALQLLAIGLLWAWATGAW).

This sequence belongs to the CobS family. Mg(2+) is required as a cofactor.

It localises to the cell inner membrane. It carries out the reaction alpha-ribazole + adenosylcob(III)inamide-GDP = adenosylcob(III)alamin + GMP + H(+). It catalyses the reaction alpha-ribazole 5'-phosphate + adenosylcob(III)inamide-GDP = adenosylcob(III)alamin 5'-phosphate + GMP + H(+). The protein operates within cofactor biosynthesis; adenosylcobalamin biosynthesis; adenosylcobalamin from cob(II)yrinate a,c-diamide: step 7/7. Its function is as follows. Joins adenosylcobinamide-GDP and alpha-ribazole to generate adenosylcobalamin (Ado-cobalamin). Also synthesizes adenosylcobalamin 5'-phosphate from adenosylcobinamide-GDP and alpha-ribazole 5'-phosphate. In Synechococcus elongatus (strain ATCC 33912 / PCC 7942 / FACHB-805) (Anacystis nidulans R2), this protein is Adenosylcobinamide-GDP ribazoletransferase.